The primary structure comprises 194 residues: 7-methyl-GTP pyrophosphatase (194 aa).

The active-site Proton acceptor is Asp-69.

Belongs to the Maf family. YceF subfamily. It depends on a divalent metal cation as a cofactor.

The protein resides in the cytoplasm. The enzyme catalyses N(7)-methyl-GTP + H2O = N(7)-methyl-GMP + diphosphate + H(+). Its function is as follows. Nucleoside triphosphate pyrophosphatase that hydrolyzes 7-methyl-GTP (m(7)GTP). May have a dual role in cell division arrest and in preventing the incorporation of modified nucleotides into cellular nucleic acids. The protein is 7-methyl-GTP pyrophosphatase (yceF) of Shigella flexneri.